The primary structure comprises 146 residues: Snaclec CTL-Eoc124 (146 aa).

The first 23 residues, 1 to 23, serve as a signal peptide directing secretion; the sequence is MGRFISVSFGLLVVFLSLSGTGA. Disulfide bonds link Cys25-Cys36, Cys53-Cys142, and Cys119-Cys134. One can recognise a C-type lectin domain in the interval 32–143; that stretch reads YQGHCYRVFN…CSRTNNVACK (112 aa).

The protein belongs to the snaclec family. Heterodimer; disulfide-linked. As to expression, expressed by the venom gland.

It localises to the secreted. Its function is as follows. Interferes with one step of hemostasis (modulation of platelet aggregation, or coagulation cascade, for example). The protein is Snaclec CTL-Eoc124 of Echis ocellatus (Ocellated saw-scaled viper).